Here is a 168-residue protein sequence, read N- to C-terminus: Peptide deformylase 1 (168 aa).

Residues Cys-92 and His-134 each coordinate Fe cation. Glu-135 is an active-site residue. His-138 contributes to the Fe cation binding site.

This sequence belongs to the polypeptide deformylase family. Requires Fe(2+) as cofactor.

The enzyme catalyses N-terminal N-formyl-L-methionyl-[peptide] + H2O = N-terminal L-methionyl-[peptide] + formate. Removes the formyl group from the N-terminal Met of newly synthesized proteins. Requires at least a dipeptide for an efficient rate of reaction. N-terminal L-methionine is a prerequisite for activity but the enzyme has broad specificity at other positions. This chain is Peptide deformylase 1, found in Pseudomonas syringae pv. tomato (strain ATCC BAA-871 / DC3000).